A 186-amino-acid polypeptide reads, in one-letter code: Elongation factor P (186 aa).

The protein belongs to the elongation factor P family.

The protein localises to the cytoplasm. The protein operates within protein biosynthesis; polypeptide chain elongation. In terms of biological role, involved in peptide bond synthesis. Stimulates efficient translation and peptide-bond synthesis on native or reconstituted 70S ribosomes in vitro. Probably functions indirectly by altering the affinity of the ribosome for aminoacyl-tRNA, thus increasing their reactivity as acceptors for peptidyl transferase. The protein is Elongation factor P of Shewanella baltica (strain OS223).